Consider the following 306-residue polypeptide: Protoheme IX farnesyltransferase (306 aa).

A run of 8 helical transmembrane segments spans residues 31 to 50, 55 to 77, 104 to 124, 125 to 145, 168 to 188, 218 to 235, 238 to 258, and 286 to 306; these read VIEL…QGGW, LILG…NCYI, LVFA…ISNW, LAAA…TLWL, WAAV…IVFL, GRAA…ATLA, LLLI…LAGG, and ASIS…LLPF.

This sequence belongs to the UbiA prenyltransferase family. Protoheme IX farnesyltransferase subfamily.

Its subcellular location is the cell membrane. It catalyses the reaction heme b + (2E,6E)-farnesyl diphosphate + H2O = Fe(II)-heme o + diphosphate. Its pathway is porphyrin-containing compound metabolism; heme O biosynthesis; heme O from protoheme: step 1/1. Converts heme B (protoheme IX) to heme O by substitution of the vinyl group on carbon 2 of heme B porphyrin ring with a hydroxyethyl farnesyl side group. The chain is Protoheme IX farnesyltransferase from Clavibacter sepedonicus (Clavibacter michiganensis subsp. sepedonicus).